The chain runs to 495 residues: ATP-dependent RNA helicase dbp3 (495 aa).

The segment covering 1–14 has biased composition (basic and acidic residues); the sequence is MAKRELQDKGSTEH. The segment at 1–49 is disordered; that stretch reads MAKRELQDKGSTEHRAKKKSRNEKHTKKAEDSQASAQSSETQYTDPKEP. The segment covering 15 to 27 has biased composition (basic residues); sequence RAKKKSRNEKHTK. A Q motif motif is present at residues 97-105; the sequence is SFTSPTAIQ. The region spanning 109–284 is the Helicase ATP-binding domain; that stretch reads WPFLFSGRDV…ATFMTSPVTV (176 aa). 122-129 lines the ATP pocket; that stretch reads AETGSGKT. The short motif at 231–234 is the DEAD box element; the sequence is DEAD. A Helicase C-terminal domain is found at 315-464; sequence RLVQLLNKYQ…DVPEDLLKFG (150 aa).

Belongs to the DEAD box helicase family. DDX5/DBP2 subfamily.

It is found in the nucleus. Its subcellular location is the nucleolus. It carries out the reaction ATP + H2O = ADP + phosphate + H(+). Its function is as follows. ATP-dependent RNA helicase required for 60S ribosomal subunit synthesis. Involved in efficient pre-rRNA processing, predominantly at site A3, which is necessary for the normal formation of 25S and 5.8S rRNAs. The chain is ATP-dependent RNA helicase dbp3 (dbp3) from Aspergillus niger (strain ATCC MYA-4892 / CBS 513.88 / FGSC A1513).